A 611-amino-acid polypeptide reads, in one-letter code: Glutathione hydrolase proenzyme 2 (611 aa).

At 1–42 the chain is on the cytoplasmic side; sequence MSPTDTTPLLYSWDDQSRHQDPDWHKLRNYHGAWYRRISRRR. Residues 43–63 traverse the membrane as a helical; Signal-anchor for type II membrane protein segment; it reads FSQFIFAFGLMTLFVLVYSIS. The Lumenal segment spans residues 64–611; the sequence is SNLHTPTQFT…PRKYGQAAAY (548 aa). Asparagine 138 carries an N-linked (GlcNAc...) asparagine glycan. Arginine 147 is a binding site for L-glutamate. N-linked (GlcNAc...) asparagine glycans are attached at residues asparagine 153, asparagine 297, and asparagine 396. The Nucleophile role is filled by threonine 420. L-glutamate contacts are provided by residues threonine 438, asparagine 440, glutamine 459, aspartate 462, 490 to 491, and 512 to 513; these read SS and GG.

Belongs to the gamma-glutamyltransferase family. As to quaternary structure, heterodimer composed of the light and heavy chains. The active site is located in the light chain. Cleaved by autocatalysis into a large and a small subunit.

The protein localises to the vacuole membrane. The catalysed reaction is an N-terminal (5-L-glutamyl)-[peptide] + an alpha-amino acid = 5-L-glutamyl amino acid + an N-terminal L-alpha-aminoacyl-[peptide]. It catalyses the reaction glutathione + H2O = L-cysteinylglycine + L-glutamate. It carries out the reaction an S-substituted glutathione + H2O = an S-substituted L-cysteinylglycine + L-glutamate. The protein operates within sulfur metabolism; glutathione metabolism. Catalyzes the transfer of the gamma-glutamyl moiety of glutathione (GSH) and other gamma-glutamyl compounds to amino acids and peptides. Major GSH-degrading enzyme, catalyzing the hydrolytic release of L-glutamate from GSH. Plays a role in the turnover of the vacuolar GSH, serving as an alternative nitrogen source during nitrogen starvation. The polypeptide is Glutathione hydrolase proenzyme 2 (ggt2) (Schizosaccharomyces pombe (strain 972 / ATCC 24843) (Fission yeast)).